Consider the following 269-residue polypeptide: Phosphonoacetaldehyde hydrolase (269 aa).

Asp-9 serves as the catalytic Nucleophile. Mg(2+) contacts are provided by Asp-9 and Ala-11. Lys-50 (schiff-base intermediate with substrate) is an active-site residue. Asp-184 is a Mg(2+) binding site.

This sequence belongs to the HAD-like hydrolase superfamily. PhnX family. Homodimer. Mg(2+) serves as cofactor.

The catalysed reaction is phosphonoacetaldehyde + H2O = acetaldehyde + phosphate + H(+). Involved in phosphonate degradation. The polypeptide is Phosphonoacetaldehyde hydrolase (Lysinibacillus sphaericus (strain C3-41)).